A 157-amino-acid polypeptide reads, in one-letter code: Small ribosomal subunit protein uS7 (157 aa).

This sequence belongs to the universal ribosomal protein uS7 family. As to quaternary structure, part of the 30S ribosomal subunit. Contacts proteins S9 and S11.

Its function is as follows. One of the primary rRNA binding proteins, it binds directly to 16S rRNA where it nucleates assembly of the head domain of the 30S subunit. Is located at the subunit interface close to the decoding center, probably blocks exit of the E-site tRNA. This chain is Small ribosomal subunit protein uS7, found in Chlamydia abortus (strain DSM 27085 / S26/3) (Chlamydophila abortus).